The sequence spans 245 residues: 2,3-bisphosphoglycerate-dependent phosphoglycerate mutase (245 aa).

Residues 8–15 (RHGQSLWN), 21–22 (TG), R60, 87–90 (ERHY), K98, 114–115 (RR), and 183–184 (GN) each bind substrate. Residue H9 is the Tele-phosphohistidine intermediate of the active site. The Proton donor/acceptor role is filled by E87.

This sequence belongs to the phosphoglycerate mutase family. BPG-dependent PGAM subfamily.

The catalysed reaction is (2R)-2-phosphoglycerate = (2R)-3-phosphoglycerate. It functions in the pathway carbohydrate degradation; glycolysis; pyruvate from D-glyceraldehyde 3-phosphate: step 3/5. Functionally, catalyzes the interconversion of 2-phosphoglycerate and 3-phosphoglycerate. The chain is 2,3-bisphosphoglycerate-dependent phosphoglycerate mutase from Bacillus cereus (strain AH187).